Consider the following 338-residue polypeptide: Methionyl-tRNA formyltransferase (338 aa).

110-113 contributes to the (6S)-5,6,7,8-tetrahydrofolate binding site; it reads SLLP.

It belongs to the Fmt family.

The catalysed reaction is L-methionyl-tRNA(fMet) + (6R)-10-formyltetrahydrofolate = N-formyl-L-methionyl-tRNA(fMet) + (6S)-5,6,7,8-tetrahydrofolate + H(+). Its function is as follows. Attaches a formyl group to the free amino group of methionyl-tRNA(fMet). The formyl group appears to play a dual role in the initiator identity of N-formylmethionyl-tRNA by promoting its recognition by IF2 and preventing the misappropriation of this tRNA by the elongation apparatus. The sequence is that of Methionyl-tRNA formyltransferase from Synechococcus sp. (strain CC9605).